A 304-amino-acid polypeptide reads, in one-letter code: Protein translocase subunit SecF (304 aa).

Transmembrane regions (helical) follow at residues 20 to 40 (AKLF…LIFT), 143 to 163 (AMMA…IRFE), 164 to 184 (LIFA…TLGF), 195 to 215 (TVVA…IVVF), 244 to 266 (LSRT…IFGG), and 276 to 298 (LVIG…VYLI).

The protein belongs to the SecD/SecF family. SecF subfamily. In terms of assembly, forms a complex with SecD. Part of the essential Sec protein translocation apparatus which comprises SecA, SecYEG and auxiliary proteins SecDF. Other proteins may also be involved.

It localises to the cell inner membrane. Part of the Sec protein translocase complex. Interacts with the SecYEG preprotein conducting channel. SecDF uses the proton motive force (PMF) to complete protein translocation after the ATP-dependent function of SecA. This chain is Protein translocase subunit SecF, found in Calditerrivibrio nitroreducens (strain DSM 19672 / NBRC 101217 / Yu37-1).